A 167-amino-acid chain; its full sequence is DNA-directed RNA polymerase 19 kDa subunit (167 aa).

The tract at residues 15-41 (DNDYKSYDEDDDSISDIGETSDDCCTT) is disordered. Acidic residues predominate over residues 22–36 (DEDDDSISDIGETSD).

This sequence belongs to the poxviridae DNA-directed RNA polymerase 19 kDa subunit family. As to quaternary structure, the DNA-dependent RNA polymerase used for intermediate and late genes expression consists of eight subunits (147) kDa, 133 kDa, 35 kDa, 30 kDa, 22 kDa, 19 kDa, 18 kDa and 7 kDa totalling more than 500 kDa in mass. The same holoenzyme, with the addition of the transcription-specificity factor RAP94, is used for early gene expression.

It is found in the virion. The catalysed reaction is RNA(n) + a ribonucleoside 5'-triphosphate = RNA(n+1) + diphosphate. Part of the DNA-dependent RNA polymerase which catalyzes the transcription of viral DNA into RNA using the four ribonucleoside triphosphates as substrates. Responsible for the transcription of early, intermediate and late genes. DNA-dependent RNA polymerase associates with the early transcription factor (ETF) thereby allowing the early genes transcription. Late transcription, and probably also intermediate transcription, require newly synthesized RNA polymerase. This chain is DNA-directed RNA polymerase 19 kDa subunit (RPO19), found in Vertebrata (FPV).